Here is a 78-residue protein sequence, read N- to C-terminus: Large ribosomal subunit protein bL28 (78 aa).

Positions 1 to 25 are disordered; the sequence is MSRVCQVTGKRPAVGNNRSHAKNAT.

Belongs to the bacterial ribosomal protein bL28 family.

The chain is Large ribosomal subunit protein bL28 from Aliivibrio salmonicida (strain LFI1238) (Vibrio salmonicida (strain LFI1238)).